A 712-amino-acid polypeptide reads, in one-letter code: DNA ligase (712 aa).

A compositionally biased stretch (low complexity) spans 1–22 (MSTQYDSDSSPAASNSGSADPA). Residues 1-23 (MSTQYDSDSSPAASNSGSADPAL) form a disordered region. Position 53–57 (53–57 (DAEFD)) interacts with NAD(+). The segment at 69-93 (SHPEAVTGPSPTTEVAPSPPESSPF) is disordered. Residues 104–105 (SL) and glutamate 129 contribute to the NAD(+) site. The active-site N6-AMP-lysine intermediate is the lysine 131. 4 residues coordinate NAD(+): arginine 152, glutamate 192, lysine 308, and lysine 332. Cysteine 426, cysteine 429, cysteine 445, and cysteine 451 together coordinate Zn(2+). The 89-residue stretch at 624–712 (IQADLLAGLS…GPGKGDAEED (89 aa)) folds into the BRCT domain.

This sequence belongs to the NAD-dependent DNA ligase family. LigA subfamily. The cofactor is Mg(2+). Requires Mn(2+) as cofactor.

The enzyme catalyses NAD(+) + (deoxyribonucleotide)n-3'-hydroxyl + 5'-phospho-(deoxyribonucleotide)m = (deoxyribonucleotide)n+m + AMP + beta-nicotinamide D-nucleotide.. DNA ligase that catalyzes the formation of phosphodiester linkages between 5'-phosphoryl and 3'-hydroxyl groups in double-stranded DNA using NAD as a coenzyme and as the energy source for the reaction. It is essential for DNA replication and repair of damaged DNA. This chain is DNA ligase, found in Corynebacterium urealyticum (strain ATCC 43042 / DSM 7109).